Consider the following 368-residue polypeptide: tRNA-specific 2-thiouridylase MnmA (368 aa).

ATP-binding positions include 11–18 and Met37; that span reads GMSGGVDS. Positions 97-99 are interaction with target base in tRNA; it reads NPD. Cys102 acts as the Nucleophile in catalysis. An intrachain disulfide couples Cys102 to Cys199. Residue Gly127 participates in ATP binding. The interaction with tRNA stretch occupies residues 149-151; it reads KDQ. The Cysteine persulfide intermediate role is filled by Cys199. The interaction with tRNA stretch occupies residues 311-312; sequence RY.

It belongs to the MnmA/TRMU family. As to quaternary structure, interacts with TusE.

The protein resides in the cytoplasm. It carries out the reaction S-sulfanyl-L-cysteinyl-[protein] + uridine(34) in tRNA + AH2 + ATP = 2-thiouridine(34) in tRNA + L-cysteinyl-[protein] + A + AMP + diphosphate + H(+). In terms of biological role, catalyzes the 2-thiolation of uridine at the wobble position (U34) of tRNA(Lys), tRNA(Glu) and tRNA(Gln), leading to the formation of s(2)U34, the first step of tRNA-mnm(5)s(2)U34 synthesis. Sulfur is provided by IscS, via a sulfur-relay system. Binds ATP and its substrate tRNAs. The sequence is that of tRNA-specific 2-thiouridylase MnmA from Salmonella arizonae (strain ATCC BAA-731 / CDC346-86 / RSK2980).